We begin with the raw amino-acid sequence, 320 residues long: Nuclease (320 aa).

His-155 serves as the catalytic Proton acceptor. Position 187 (Asn-187) interacts with Mg(2+). N-linked (GlcNAc...) asparagine glycosylation is present at Asn-204. A disulfide bond links Cys-312 and Cys-317.

Belongs to the DNA/RNA non-specific endonuclease family. As to quaternary structure, homodimer; as a result of non-covalent interactions and not through the disulfide linkages between the two monomers. Requires Mg(2+) as cofactor. It depends on Mn(2+) as a cofactor. In terms of processing, glycosylated.

The protein localises to the secreted. This enzyme has both RNase and DNase activity. The sequence is that of Nuclease from Syncephalastrum racemosum (Filamentous fungus).